The following is a 121-amino-acid chain: MKLLIVFGLLTSVYCIHKECSIQECCENQPYQIEDPCPIHYYSDWFIKIGSRKSARLVQLCEGDYGKRIPIHYEMFGNYTISCEPLEINCQAPPVGSLIVRCSYDYDFVEHHDVRVVLDFI.

Positions 1–15 (MKLLIVFGLLTSVYC) are cleaved as a signal peptide. One can recognise an SARS ORF8 Ig-like domain in the interval 19–121 (ECSIQECCEN…HDVRVVLDFI (103 aa)). Intrachain disulfides connect Cys25-Cys90, Cys37-Cys102, and Cys61-Cys83.

This Rhinolophus macrotis (Big-eared horseshoe bat) protein is Non-structural protein 8.